The following is a 1506-amino-acid chain: Transcriptional repressor NF-X1 homolog (1506 aa).

Over residues 1-12 (MEESQNIPPKTQ) the composition is skewed to polar residues. 3 disordered regions span residues 1–123 (MEES…NNQL), 142–164 (LKSE…QEPT), and 181–282 (KAFV…KKDI). Composition is skewed to low complexity over residues 13 to 103 (TLNN…SNSN) and 110 to 121 (HNNNYNNNNNNN). A compositionally biased stretch (low complexity) spans 194–209 (NNTNNNNNNNNNNNNN). Residues 217-232 (DNNRPQRERRERKPKE) are compositionally biased toward basic and acidic residues. Residues 240 to 252 (PQQPQQPQQPQPQ) are compositionally biased toward pro residues. Residues 253 to 263 (PQQQQQSQQQQ) show a composition bias toward low complexity. Positions 267–282 (ENNRKKENKLQSKKDI) are enriched in basic and acidic residues. Residues 363 to 416 (IYECMVCFENVGKNAVIWSCSQCFTMFHSSCIKQWSSKSVTTEGKWKCPGCRYN) form a PHD-type zinc finger. The RING-type; degenerate zinc finger occupies 366-414 (CMVCFENVGKNAVIWSCSQCFTMFHSSCIKQWSSKSVTTEGKWKCPGCR). 7 consecutive NF-X1-type zinc fingers follow at residues 460–478 (CPHS…NCSS), 515–534 (CGNH…PCEV), 581–600 (CGNH…PCSL), 642–661 (CKQH…SCKV), 739–758 (CGVH…NCYI), 796–817 (CGHS…PCTY), and 852–868 (CLSH…PCLI). Disordered stretches follow at residues 897-1012 (QQSK…VDLN) and 1021-1040 (NEEE…DEDE). Positions 903-921 (TTTTTTTTTTSTTSTTSPK) are enriched in low complexity. A compositionally biased stretch (acidic residues) spans 925 to 934 (KDEELIEDDN). The segment covering 935–980 (NNNNNNNNNNNNNNNNNNNNNNNNNNNNNNNNNNNNNNNNNNNNNN) has biased composition (low complexity). Composition is skewed to basic and acidic residues over residues 981-1002 (EKAE…HSDD) and 1021-1031 (NEEEERIKKEE). The NF-X1-type 8 zinc finger occupies 1062 to 1084 (CEHTCHQACHPGEPCPTNISCKQ). Disordered regions lie at residues 1132 to 1167 (SHTL…SSPT) and 1447 to 1473 (NQNQ…IKPT). Low complexity-rich tracts occupy residues 1137-1167 (NNPN…SSPT) and 1447-1470 (NQNQ…NINI).

The protein belongs to the NFX1 family.

Its subcellular location is the nucleus. Functionally, may play a role in transcription regulation. This is Transcriptional repressor NF-X1 homolog (nfx1) from Dictyostelium discoideum (Social amoeba).